Here is a 264-residue protein sequence, read N- to C-terminus: Acyl-[acyl-carrier-protein]--UDP-N-acetylglucosamine O-acyltransferase (264 aa).

Belongs to the transferase hexapeptide repeat family. LpxA subfamily. In terms of assembly, homotrimer.

It is found in the cytoplasm. The enzyme catalyses a (3R)-hydroxyacyl-[ACP] + UDP-N-acetyl-alpha-D-glucosamine = a UDP-3-O-[(3R)-3-hydroxyacyl]-N-acetyl-alpha-D-glucosamine + holo-[ACP]. The protein operates within glycolipid biosynthesis; lipid IV(A) biosynthesis; lipid IV(A) from (3R)-3-hydroxytetradecanoyl-[acyl-carrier-protein] and UDP-N-acetyl-alpha-D-glucosamine: step 1/6. Its function is as follows. Involved in the biosynthesis of lipid A, a phosphorylated glycolipid that anchors the lipopolysaccharide to the outer membrane of the cell. The sequence is that of Acyl-[acyl-carrier-protein]--UDP-N-acetylglucosamine O-acyltransferase from Chlorobium phaeobacteroides (strain DSM 266 / SMG 266 / 2430).